Consider the following 227-residue polypeptide: Cytochrome c oxidase subunit 2 (227 aa).

At methionine 1 to serine 14 the chain is on the mitochondrial intermembrane side. A helical transmembrane segment spans residues proline 15–methionine 45. The Mitochondrial matrix segment spans residues leucine 46–glutamine 59. Residues glutamate 60–methionine 87 traverse the membrane as a helical segment. At aspartate 88–leucine 227 the chain is on the mitochondrial intermembrane side. Residues histidine 161, cysteine 196, glutamate 198, cysteine 200, histidine 204, and methionine 207 each coordinate Cu cation. Glutamate 198 is a binding site for Mg(2+).

The protein belongs to the cytochrome c oxidase subunit 2 family. In terms of assembly, component of the cytochrome c oxidase (complex IV, CIV), a multisubunit enzyme composed of 14 subunits. The complex is composed of a catalytic core of 3 subunits MT-CO1, MT-CO2 and MT-CO3, encoded in the mitochondrial DNA, and 11 supernumerary subunits COX4I, COX5A, COX5B, COX6A, COX6B, COX6C, COX7A, COX7B, COX7C, COX8 and NDUFA4, which are encoded in the nuclear genome. The complex exists as a monomer or a dimer and forms supercomplexes (SCs) in the inner mitochondrial membrane with NADH-ubiquinone oxidoreductase (complex I, CI) and ubiquinol-cytochrome c oxidoreductase (cytochrome b-c1 complex, complex III, CIII), resulting in different assemblies (supercomplex SCI(1)III(2)IV(1) and megacomplex MCI(2)III(2)IV(2)). Found in a complex with TMEM177, COA6, COX18, COX20, SCO1 and SCO2. Interacts with TMEM177 in a COX20-dependent manner. Interacts with COX20. Interacts with COX16. Cu cation is required as a cofactor.

It localises to the mitochondrion inner membrane. The catalysed reaction is 4 Fe(II)-[cytochrome c] + O2 + 8 H(+)(in) = 4 Fe(III)-[cytochrome c] + 2 H2O + 4 H(+)(out). Component of the cytochrome c oxidase, the last enzyme in the mitochondrial electron transport chain which drives oxidative phosphorylation. The respiratory chain contains 3 multisubunit complexes succinate dehydrogenase (complex II, CII), ubiquinol-cytochrome c oxidoreductase (cytochrome b-c1 complex, complex III, CIII) and cytochrome c oxidase (complex IV, CIV), that cooperate to transfer electrons derived from NADH and succinate to molecular oxygen, creating an electrochemical gradient over the inner membrane that drives transmembrane transport and the ATP synthase. Cytochrome c oxidase is the component of the respiratory chain that catalyzes the reduction of oxygen to water. Electrons originating from reduced cytochrome c in the intermembrane space (IMS) are transferred via the dinuclear copper A center (CU(A)) of subunit 2 and heme A of subunit 1 to the active site in subunit 1, a binuclear center (BNC) formed by heme A3 and copper B (CU(B)). The BNC reduces molecular oxygen to 2 water molecules using 4 electrons from cytochrome c in the IMS and 4 protons from the mitochondrial matrix. This Dugong dugon (Dugong) protein is Cytochrome c oxidase subunit 2 (MT-CO2).